The sequence spans 306 residues: tRNA dimethylallyltransferase (306 aa).

13 to 20 (GPTGAGKT) provides a ligand contact to ATP. 15-20 (TGAGKT) is a binding site for substrate. 2 interaction with substrate tRNA regions span residues 38 to 41 (DSRQ) and 161 to 165 (QRNAR).

The protein belongs to the IPP transferase family. As to quaternary structure, monomer. Mg(2+) is required as a cofactor.

It catalyses the reaction adenosine(37) in tRNA + dimethylallyl diphosphate = N(6)-dimethylallyladenosine(37) in tRNA + diphosphate. Catalyzes the transfer of a dimethylallyl group onto the adenine at position 37 in tRNAs that read codons beginning with uridine, leading to the formation of N6-(dimethylallyl)adenosine (i(6)A). The chain is tRNA dimethylallyltransferase from Maridesulfovibrio salexigens (strain ATCC 14822 / DSM 2638 / NCIMB 8403 / VKM B-1763) (Desulfovibrio salexigens).